The chain runs to 162 residues: Ribonuclease H (162 aa).

One can recognise an RNase H type-1 domain in the interval 1 to 141 (MKRIEIFTDG…ADALARAGMA (141 aa)). Residues aspartate 9, glutamate 47, aspartate 69, and aspartate 133 each coordinate Mg(2+). The disordered stretch occupies residues 139–162 (GMAPFKKKKGGDTASSEEGSARRR).

This sequence belongs to the RNase H family. In terms of assembly, monomer. Mg(2+) serves as cofactor.

It is found in the cytoplasm. It catalyses the reaction Endonucleolytic cleavage to 5'-phosphomonoester.. In terms of biological role, endonuclease that specifically degrades the RNA of RNA-DNA hybrids. The protein is Ribonuclease H of Chelativorans sp. (strain BNC1).